Reading from the N-terminus, the 752-residue chain is Catalase-peroxidase (752 aa).

The interval 1–21 is disordered; it reads MSNESKCPFHQTAGGGTTNRD. Positions 91 to 245 form a cross-link, tryptophyl-tyrosyl-methioninium (Trp-Tyr) (with M-271); sequence WHSAGTYRIG…LAAVQMGLIY (155 aa). Residue H92 is the Proton acceptor of the active site. Residues 204 to 228 form a disordered region; the sequence is QAPGQGDLVAEPAKHGEEQNRDLSA. Positions 215–228 are enriched in basic and acidic residues; the sequence is PAKHGEEQNRDLSA. Residues 245 to 271 constitute a cross-link (tryptophyl-tyrosyl-methioninium (Tyr-Met) (with W-91)); that stretch reads YVNPEGPEGNPDPVASGKDIRETFGRM. H286 contacts heme. The segment at 366 to 391 is disordered; it reads AHQWQPKEGKGAGTVPDAHDPSKRHA.

The protein belongs to the peroxidase family. Peroxidase/catalase subfamily. In terms of assembly, homodimer or homotetramer. Requires heme b as cofactor. Post-translationally, formation of the three residue Trp-Tyr-Met cross-link is important for the catalase, but not the peroxidase activity of the enzyme.

The enzyme catalyses H2O2 + AH2 = A + 2 H2O. It carries out the reaction 2 H2O2 = O2 + 2 H2O. Its function is as follows. Bifunctional enzyme with both catalase and broad-spectrum peroxidase activity. The chain is Catalase-peroxidase from Pseudomonas putida (strain W619).